Here is a 196-residue protein sequence, read N- to C-terminus: Rho-related GTP-binding protein RhoB (196 aa).

Position 12-19 (12-19) interacts with GTP; the sequence is GDGACGKT. Residue tyrosine 34 is glycosylated (O-linked (GlcNAc) tyrosine; by Photorhabdus PAU_02230). Residues 34-42 carry the Effector region motif; it reads YVPTVFENY. A glycan ((Microbial infection) O-linked (Glc) threonine; by C.difficile toxins TcdA and TcdB) is linked at threonine 37. Asparagine 41 carries the post-translational modification ADP-ribosylasparagine; by botulinum toxin. Residues 59 to 63 and 117 to 120 contribute to the GTP site; these read DTAGQ and NKKD. Tyrosine 154 is modified (phosphotyrosine). S-palmitoyl cysteine attachment occurs at residues cysteine 189 and cysteine 192. Residue cysteine 193 is modified to Cysteine methyl ester. Cysteine 193 carries the S-farnesyl cysteine; in plasma membrane form lipid modification. Residue cysteine 193 is the site of S-geranylgeranyl cysteine; in endosomal form attachment. Residues 194-196 constitute a propeptide, removed in mature form; it reads KVL.

The protein belongs to the small GTPase superfamily. Rho family. In terms of assembly, binds ROCK1 and ROCK2. Also binds PKN1/PRK1. Interacts with ARGGEF3. Interacts with RTKN. Interacts with AKAP13. Interacts with RIPOR1. In terms of processing, prenylation specifies the subcellular location of RHOB. The farnesylated form is localized to the plasma membrane while the geranylgeranylated form is localized to the endosome. Post-translationally, (Microbial infection) Glycosylated at Tyr-34 by Photorhabdus asymbiotica toxin PAU_02230. Mono-O-GlcNAcylation by PAU_02230 inhibits downstream signaling by an impaired interaction with diverse regulator and effector proteins of Rho and leads to actin disassembly. (Microbial infection) Glucosylated at Thr-37 by C.difficile toxins TcdA and TcdB in the colonic epithelium. Monoglucosylation completely prevents the recognition of the downstream effector, blocking the GTPases in their inactive form, leading to actin cytoskeleton disruption.

It is found in the late endosome membrane. The protein localises to the cell membrane. The protein resides in the nucleus. Its subcellular location is the cleavage furrow. In terms of biological role, mediates apoptosis in neoplastically transformed cells after DNA damage. Not essential for development but affects cell adhesion and growth factor signaling in transformed cells. Plays a negative role in tumorigenesis as deletion causes tumor formation. Involved in intracellular protein trafficking of a number of proteins. Targets PKN1 to endosomes and is involved in trafficking of the EGF receptor from late endosomes to lysosomes. Also required for stability and nuclear trafficking of AKT1/AKT which promotes endothelial cell survival during vascular development. Serves as a microtubule-dependent signal that is required for the myosin contractile ring formation during cell cycle cytokinesis. Required for genotoxic stress-induced cell death in breast cancer cells. In Homo sapiens (Human), this protein is Rho-related GTP-binding protein RhoB (RHOB).